The primary structure comprises 1153 residues: AP-3 complex subunit delta-1 (1153 aa).

Position 2 is an N-acetylalanine (Ala2). 11 HEAT repeats span residues 34-71, 77-114, 142-179, 180-216, 254-292, 299-336, 338-373, 375-409, 431-468, 497-535, and 548-585; these read KYIS…LGYD, FNII…LTTN, DLAR…KYPE, SLRP…RNPK, RLGK…SLSS, ASIQ…THPK, VQSH…KKNL, EIVK…QSNY, TRHG…SAHL, QEPH…SILQ, and AVTQ…IQKL. Disordered regions lie at residues 629 to 696 and 726 to 920; these read EPLS…YQDT and KLEE…PPES. Phosphoserine occurs at positions 632, 634, 636, and 658. The segment covering 639–675 has biased composition (basic and acidic residues); the sequence is ERPRAVFHEEEQRRPKHRPSEADEEELARRREARKQE. A coiled-coil region spans residues 659–679; sequence EADEEELARRREARKQEQANN. At Ser688 the chain carries Phosphoserine. Residues 725 to 756 adopt a coiled-coil conformation; the sequence is VKLEEERRHRQKLEKDKRRKKRKEKEKKGKRR. Over residues 726–740 the composition is skewed to basic and acidic residues; sequence KLEEERRHRQKLEKD. Residues 741–758 show a composition bias toward basic residues; it reads KRRKKRKEKEKKGKRRHS. A phosphoserine mark is found at Ser758 and Ser759. The residue at position 762 (Thr762) is a Phosphothreonine. Phosphoserine occurs at positions 764, 785, 788, 828, and 829. A compositionally biased stretch (acidic residues) spans 777–794; it reads VTEEMPENALPSDEDDKD. Residues 795–839 show a composition bias toward basic and acidic residues; it reads PNDPYRALDIDLDKPLADSEKLPIQKHRNTETSKSPEKDVPMVEK. 2 stretches are compositionally biased toward basic residues: residues 840–853 and 863–879; these read KSKK…KHKE and EKEK…KHRK. A coiled-coil region spans residues 845 to 869; the sequence is KKKEKKHKEKERDKEKKKEKEKKKS. Position 931 is a phosphoserine (Val931).

Belongs to the adaptor complexes large subunit family. In terms of assembly, AP-3 associates with the BLOC-1 complex. Adaptor protein complex 3 (AP-3) is a heterotetramer composed of two large adaptins (delta-type subunit AP3D1 and beta-type subunit AP3B1 or AP3B2), a medium adaptin (mu-type subunit AP3M1 or AP3M2) and a small adaptin (sigma-type subunit APS1 or AP3S2). Interacts with SLC30A2. Interacts with CLN3 (via dileucine motif); this interaction facilitates lysosomal targeting. Present in all adult tissues examined with the highest levels in skeletal muscle, heart, pancreas and testis.

It is found in the cytoplasm. Its subcellular location is the golgi apparatus membrane. Functionally, part of the AP-3 complex, an adaptor-related complex which is not clathrin-associated. The complex is associated with the Golgi region as well as more peripheral structures. It facilitates the budding of vesicles from the Golgi membrane and may be directly involved in trafficking to lysosomes. Involved in process of CD8+ T-cell and NK cell degranulation. In concert with the BLOC-1 complex, AP-3 is required to target cargos into vesicles assembled at cell bodies for delivery into neurites and nerve terminals. The protein is AP-3 complex subunit delta-1 (AP3D1) of Homo sapiens (Human).